The primary structure comprises 605 residues: Kelch-like protein 26 (605 aa).

Residues 53-120 (LDVVLAIDNE…AYSSEVTLDL (68 aa)) enclose the BTB domain. Residues 155–256 (CLNIGQMATT…RSSELVDSVQ (102 aa)) enclose the BACK domain. 6 Kelch repeats span residues 300-351 (SLIT…VLDN), 352-403 (FVYV…VLDG), 404-450 (QLYA…TCGD), 452-498 (LYIS…SANN), 499-549 (RIYA…LLDK), and 551-598 (IYIV…PIIL).

May play a role in endo(sarco)plasmic reticulum (ER/SR) mitochondrial signaling. May be part of the ubiquitin-proteasome system (UPS) and affect ubiquitination and degradation of target substrates. In Danio rerio (Zebrafish), this protein is Kelch-like protein 26 (klhl26).